The following is a 570-amino-acid chain: Molecular chaperone MKKS (570 aa).

192–199 (GHIILGKS) provides a ligand contact to ATP. A substrate-binding apical domain region spans residues 198 to 370 (KSLIVPLKGQ…FHLIPNEATI (173 aa)).

Belongs to the TCP-1 chaperonin family. Component of a complex composed at least of MKKS, BBS10, BBS12, TCP1, CCT2, CCT3, CCT4, CCT5 and CCT8. Interacts with STUB1. Interacts with BBS2 (via coiled coil domain). Interacts with CCDC28B. Interacts with BBS12. Interacts with SMARCC1, a component of the SWI/SNF complexes; the interaction takes place predominantly in the cytoplasm and may modulate SMARCC1 location. Interacts with DLEC1.

It is found in the cytoplasm. Its subcellular location is the cytoskeleton. The protein resides in the microtubule organizing center. It localises to the centrosome. The protein localises to the cytosol. It is found in the nucleus. In terms of biological role, probable molecular chaperone that assists the folding of proteins upon ATP hydrolysis. Plays a role in the assembly of BBSome, a complex involved in ciliogenesis regulating transports vesicles to the cilia. May play a role in protein processing in limb, cardiac and reproductive system development. May play a role in cytokinesis. The protein is Molecular chaperone MKKS (MKKS) of Pongo abelii (Sumatran orangutan).